Here is a 494-residue protein sequence, read N- to C-terminus: Catalase isozyme 2 (494 aa).

Positions 1-29 (MDPCKFRPSSSFDTKTTTTNAGQPVWNDN) are disordered. Residues 8 to 22 (PSSSFDTKTTTTNAG) show a composition bias toward polar residues. Catalysis depends on residues His-65 and Asn-138. Tyr-348 is a binding site for heme.

It belongs to the catalase family. Homotetramer. Heme is required as a cofactor.

Its subcellular location is the peroxisome. It localises to the glyoxysome. The enzyme catalyses 2 H2O2 = O2 + 2 H2O. Occurs in almost all aerobically respiring organisms and serves to protect cells from the toxic effects of hydrogen peroxide. This chain is Catalase isozyme 2 (CAT2), found in Hordeum vulgare (Barley).